A 359-amino-acid polypeptide reads, in one-letter code: DNA polymerase IV (359 aa).

The region spanning isoleucine 7–glycine 188 is the UmuC domain. 2 residues coordinate Mg(2+): aspartate 11 and aspartate 106. Glutamate 107 is an active-site residue.

This sequence belongs to the DNA polymerase type-Y family. As to quaternary structure, monomer. Requires Mg(2+) as cofactor.

It is found in the cytoplasm. It carries out the reaction DNA(n) + a 2'-deoxyribonucleoside 5'-triphosphate = DNA(n+1) + diphosphate. Functionally, poorly processive, error-prone DNA polymerase involved in untargeted mutagenesis. Copies undamaged DNA at stalled replication forks, which arise in vivo from mismatched or misaligned primer ends. These misaligned primers can be extended by PolIV. Exhibits no 3'-5' exonuclease (proofreading) activity. May be involved in translesional synthesis, in conjunction with the beta clamp from PolIII. This Clostridium perfringens (strain ATCC 13124 / DSM 756 / JCM 1290 / NCIMB 6125 / NCTC 8237 / Type A) protein is DNA polymerase IV.